We begin with the raw amino-acid sequence, 366 residues long: MVVLGSTGSIGVNTLEIARRYDIEIEGLVAGNNYEVLNAQIKEFKPKYVVVKDLKTAEKIDFPNVKYGEEAVLDMIEKSKSDLIVNALVGDAGLRPTLKAQECGKKIALANKESLVNAGKFIDTSKITPIDSEHFGLWYLLIEKCRVKSEKCNVKKLYITASGGALRDWSLEDIKKATLKDVLKHPNWSMGVKITIDSATMVNKLFELLEAKWLFDTDKIDAFIETKSIIHALVEWQDGSTTAHISKTDMKLPIAFAVLDEVNDEILSPVNLLEVGGLEFRKIEVEKYPVWEIKDLLLIKPDLGVVVNTANEFAIEKFLEERISFIDISGIILKAVQKFENVNINGIDDVFEIKNEVRKWCESNFV.

NADPH-binding residues include Thr7, Gly8, Ser9, Ile10, Gly31, Asn33, and Asn111. Lys112 provides a ligand contact to 1-deoxy-D-xylulose 5-phosphate. Residue Glu113 coordinates NADPH. Asp131 provides a ligand contact to Mn(2+). 1-deoxy-D-xylulose 5-phosphate is bound by residues Ser132, Glu133, Ser162, and His185. Glu133 provides a ligand contact to Mn(2+). NADPH is bound at residue Gly191. Residues Ser198, Asn203, Lys204, and Glu207 each contribute to the 1-deoxy-D-xylulose 5-phosphate site. Residue Glu207 participates in Mn(2+) binding.

Belongs to the DXR family. Mg(2+) is required as a cofactor. Mn(2+) serves as cofactor.

The catalysed reaction is 2-C-methyl-D-erythritol 4-phosphate + NADP(+) = 1-deoxy-D-xylulose 5-phosphate + NADPH + H(+). Its pathway is isoprenoid biosynthesis; isopentenyl diphosphate biosynthesis via DXP pathway; isopentenyl diphosphate from 1-deoxy-D-xylulose 5-phosphate: step 1/6. In terms of biological role, catalyzes the NADPH-dependent rearrangement and reduction of 1-deoxy-D-xylulose-5-phosphate (DXP) to 2-C-methyl-D-erythritol 4-phosphate (MEP). The chain is 1-deoxy-D-xylulose 5-phosphate reductoisomerase from Nautilia profundicola (strain ATCC BAA-1463 / DSM 18972 / AmH).